Here is a 137-residue protein sequence, read N- to C-terminus: NTF2-related export protein (137 aa).

Residues 19–135 (ESKKFMDVYY…YKVKSDRFRY (117 aa)) enclose the NTF2 domain.

Preferentially binds Ran-GTP.

The protein localises to the nucleus. Stimulator of protein export for NES-containing proteins. Also plays a role in the nuclear export of U1 snRNA, tRNA, and mRNA. In Caenorhabditis elegans, this protein is NTF2-related export protein (nxt-1).